We begin with the raw amino-acid sequence, 339 residues long: Phytoene synthase (339 aa).

The protein belongs to the phytoene/squalene synthase family. The cofactor is ATP. Requires Mn(2+) as cofactor. Mg(2+) serves as cofactor.

It participates in carotenoid biosynthesis; phytoene biosynthesis. Involved in the biosynthesis of carotenoids. Catalyzes the condensation of two molecules of geranylgeranyl diphosphate (GGPP) to give prephytoene diphosphate (PPPP) and the subsequent rearrangement of the cyclopropylcarbinyl intermediate to yield phytoene. The sequence is that of Phytoene synthase (crtB) from Rhodobacter capsulatus (strain ATCC BAA-309 / NBRC 16581 / SB1003).